The following is a 1357-amino-acid chain: DNA-directed RNA polymerase subunit beta (1357 aa).

The protein belongs to the RNA polymerase beta chain family. The RNAP catalytic core consists of 2 alpha, 1 beta, 1 beta' and 1 omega subunit. When a sigma factor is associated with the core the holoenzyme is formed, which can initiate transcription.

The catalysed reaction is RNA(n) + a ribonucleoside 5'-triphosphate = RNA(n+1) + diphosphate. Functionally, DNA-dependent RNA polymerase catalyzes the transcription of DNA into RNA using the four ribonucleoside triphosphates as substrates. The sequence is that of DNA-directed RNA polymerase subunit beta from Pseudomonas putida (strain ATCC 700007 / DSM 6899 / JCM 31910 / BCRC 17059 / LMG 24140 / F1).